The sequence spans 486 residues: PTS system N-acetylmuramic acid-specific EIIBC component (486 aa).

The region spanning 1–89 is the PTS EIIB type-1 domain; it reads MAKITQTMIS…NKLIESVING (89 aa). The Phosphocysteine intermediate; for EIIB activity role is filled by Cys28. The PTS EIIC type-1 domain occupies 127–486; sequence SKFATIFTPL…FFGSKDVDLS (360 aa). Transmembrane regions (helical) follow at residues 129–149, 170–190, 196–216, 230–250, 268–288, 312–332, 347–367, 381–401, 411–431, and 453–473; these read FATIFTPLIPGFIAAGLLLGF, LIAYMKVFGKGLFAFLSILIG, AFGGSGVNGAILASLFVLGYN, FFGYTIDPRGNIIGVLLAAII, MILTSVVTLLIMGVVTFVVIM, AAILAGLFLISVVFGIHQGFV, LFPILAMAGGGQVGASLALYF, GAIIPGILGIGEPLIYGVTLP, IGGAAGGFFIGLVSYLGLPVG, and IFAGMAVFVVGLLISYVVGFL.

It is found in the cell inner membrane. The enzyme catalyses N-acetyl-beta-D-muramate(out) + N(pros)-phospho-L-histidyl-[protein] = N-acetyl-beta-D-muramate 6-phosphate(in) + L-histidyl-[protein]. Its function is as follows. The phosphoenolpyruvate-dependent sugar phosphotransferase system (sugar PTS), a major carbohydrate active transport system, catalyzes the phosphorylation of incoming sugar substrates concomitantly with their translocation across the cell membrane. This system is involved in N-acetylmuramic acid (MurNAc) transport, yielding cytoplasmic MurNAc-6-P. Is also able to take up anhydro-N-acetylmuramic acid (anhMurNAc), but cannot phosphorylate the carbon 6, probably because of the 1,6-anhydro ring. This Vibrio vulnificus (strain YJ016) protein is PTS system N-acetylmuramic acid-specific EIIBC component (murP).